The chain runs to 124 residues: Fluoride-specific ion channel FluC (124 aa).

Transmembrane regions (helical) follow at residues 1 to 21 (MIAL…LRFA), 37 to 57 (GTLA…GLFL), 69 to 89 (GLIV…LDTV), and 99 to 119 (LALG…WAGL). 2 residues coordinate Na(+): Gly-76 and Thr-79.

Belongs to the fluoride channel Fluc/FEX (TC 1.A.43) family.

The protein resides in the cell inner membrane. The catalysed reaction is fluoride(in) = fluoride(out). Its activity is regulated as follows. Na(+) is not transported, but it plays an essential structural role and its presence is essential for fluoride channel function. Fluoride-specific ion channel. Important for reducing fluoride concentration in the cell, thus reducing its toxicity. The sequence is that of Fluoride-specific ion channel FluC from Pseudomonas putida (strain ATCC 700007 / DSM 6899 / JCM 31910 / BCRC 17059 / LMG 24140 / F1).